The sequence spans 216 residues: Guanylate kinase (216 aa).

Residues 11–189 (GVLIVISGPS…AVKKIEAILL (179 aa)) enclose the Guanylate kinase-like domain. 18 to 25 (GPSGAGKG) contacts ATP.

This sequence belongs to the guanylate kinase family.

The protein localises to the cytoplasm. It carries out the reaction GMP + ATP = GDP + ADP. Its function is as follows. Essential for recycling GMP and indirectly, cGMP. In Clostridium perfringens (strain 13 / Type A), this protein is Guanylate kinase (gmk).